Consider the following 1200-residue polypeptide: Ice nucleation protein (1200 aa).

Positions 176-1151 (ATYGSTLSGD…LSAGEDSILI (976 aa)) are octapeptide periodicity.

It belongs to the bacterial ice nucleation protein family.

Its subcellular location is the cell outer membrane. In terms of biological role, ice nucleation proteins enable bacteria to nucleate crystallization in supercooled water. The sequence is that of Ice nucleation protein (inaZ) from Pseudomonas syringae pv. syringae.